Consider the following 413-residue polypeptide: Aspartate aminotransferase, cytoplasmic (413 aa).

Glycine 39 and tryptophan 141 together coordinate L-aspartate. Position 149 is a phosphoserine (serine 149). L-aspartate is bound at residue asparagine 195. Position 259 is an N6-(pyridoxal phosphate)lysine (lysine 259). Residue arginine 387 participates in L-aspartate binding.

It belongs to the class-I pyridoxal-phosphate-dependent aminotransferase family. In terms of assembly, homodimer. The cofactor is pyridoxal 5'-phosphate.

Its subcellular location is the cytoplasm. The enzyme catalyses L-aspartate + 2-oxoglutarate = oxaloacetate + L-glutamate. It carries out the reaction L-cysteine + 2-oxoglutarate = 2-oxo-3-sulfanylpropanoate + L-glutamate. The catalysed reaction is (2S)-2-aminobutanoate + 2-oxoglutarate = 2-oxobutanoate + L-glutamate. It catalyses the reaction 3-sulfino-L-alanine + 2-oxoglutarate = 3-sulfinopyruvate + L-glutamate. Functionally, biosynthesis of L-glutamate from L-aspartate or L-cysteine. Important regulator of levels of glutamate, the major excitatory neurotransmitter of the vertebrate central nervous system. Acts as a scavenger of glutamate in brain neuroprotection. The aspartate aminotransferase activity is involved in hepatic glucose synthesis during development and in adipocyte glyceroneogenesis. Using L-cysteine as substrate, regulates levels of mercaptopyruvate, an important source of hydrogen sulfide. Mercaptopyruvate is converted into H(2)S via the action of 3-mercaptopyruvate sulfurtransferase (3MST). Hydrogen sulfide is an important synaptic modulator and neuroprotectant in the brain. In Pan troglodytes (Chimpanzee), this protein is Aspartate aminotransferase, cytoplasmic.